We begin with the raw amino-acid sequence, 734 residues long: Regulator of G-protein signaling rgs-6 (734 aa).

The segment at methionine 1–asparagine 24 is disordered. The span at asparagine 8 to asparagine 24 shows a compositional bias: low complexity. In terms of domain architecture, RGS spans isoleucine 46–serine 157. Disordered regions lie at residues glutamine 162–histidine 236, histidine 489–alanine 515, and valine 538–valine 734. The segment covering threonine 166–aspartate 176 has biased composition (acidic residues). The span at histidine 180 to glutamate 191 shows a compositional bias: polar residues. The segment covering alanine 194 to alanine 208 has biased composition (low complexity). Polar residues-rich tracts occupy residues serine 494 to arginine 506 and valine 538 to arginine 557. 2 stretches are compositionally biased toward basic and acidic residues: residues serine 563–aspartate 585 and threonine 606–aspartate 619. Positions alanine 642–threonine 694 are enriched in low complexity. Composition is skewed to polar residues over residues serine 705–leucine 715 and arginine 724–valine 734.

The sequence is that of Regulator of G-protein signaling rgs-6 from Caenorhabditis elegans.